A 456-amino-acid polypeptide reads, in one-letter code: MRKSPGLSDCLWAWILLLSTLTGRSYGQPSLQDELKDNTTVFTRILDRLLDGYDNRLRPGLGERVTEVKTDIFVTSFGPVSDHDMEYTIDVFFRQSWKDERLKFKGPMTVLRLNNLMASKIWTPDTFFHNGKKSVAHNMTMPNKLLRITEDGTLLYTMRLTVRAECPMHLEDFPMDAHACPLKFGSYAYTRAEVVYEWTREPARSVVVAEDGSRLNQYDLLGQTVDSGIVQSSTGEYVVMTTHFHLKRKIGYFVIQTYLPCIMTVILSQVSFWLNRESVPARTVFGVTTVLTMTTLSISARNSLPKVAYATAMDWFIAVCYAFVFSALIEFATVNYFTKRGYAWDGKSVVPEKPKKVKDPLIKKNNTYAPTATSYTPNLARGDPGLATIAKSATIEPKEVKPETKPPEPKKTFNSVSKIDRLSRIAFPLLFGIFNLVYWATYLNREPQLKAPTPHQ.

The signal sequence occupies residues 1–27 (MRKSPGLSDCLWAWILLLSTLTGRSYG). At 28 to 253 (QPSLQDELKD…FHLKRKIGYF (226 aa)) the chain is on the extracellular side. N-linked (GlcNAc...) asparagine glycosylation is present at Asn38. Arg94 lines the 4-aminobutanoate pocket. Asn138 carries an N-linked (GlcNAc...) asparagine glycan. Thr157 serves as a coordination point for 4-aminobutanoate. A disulfide bridge connects residues Cys166 and Cys180. The helical transmembrane segment at 254–274 (VIQTYLPCIMTVILSQVSFWL) threads the bilayer. Position 273 (Trp273) interacts with 3alpha-hydroxy-5alpha-pregnan-11,20-dione. Residues 275-279 (NRESV) lie on the Cytoplasmic side of the membrane. The helical transmembrane segment at 280 to 301 (PARTVFGVTTVLTMTTLSISAR) threads the bilayer. Residues 302–311 (NSLPKVAYAT) are Extracellular-facing. Residues 312–333 (AMDWFIAVCYAFVFSALIEFAT) traverse the membrane as a helical segment. At 334 to 421 (VNYFTKRGYA…TFNSVSKIDR (88 aa)) the chain is on the cytoplasmic side. Residues 422 to 441 (LSRIAFPLLFGIFNLVYWAT) form a helical membrane-spanning segment. Over 442–456 (YLNREPQLKAPTPHQ) the chain is Extracellular.

This sequence belongs to the ligand-gated ion channel (TC 1.A.9) family. Gamma-aminobutyric acid receptor (TC 1.A.9.5) subfamily. GABRA1 sub-subfamily. As to quaternary structure, heteropentamer, formed by a combination of alpha (GABRA1-6), beta (GABRB1-3), gamma (GABRG1-3), delta (GABRD), epsilon (GABRE), rho (GABRR1-3), pi (GABRP) and theta (GABRQ) subunits, each subunit exhibiting distinct physiological and pharmacological properties. Interacts with UBQLN1. Interacts with TRAK1. Interacts with KIF21B. Identified in a complex of 720 kDa composed of LHFPL4, NLGN2, GABRA1, GABRB2, GABRG2 and GABRB3. Interacts with LHFPL4. Interacts with NLGN2. Interacts with SHISA7; interaction leads regulation of GABAAR trafficking, channel deactivation kinetics and pharmacology.

It is found in the postsynaptic cell membrane. Its subcellular location is the cell membrane. It localises to the cytoplasmic vesicle membrane. It carries out the reaction chloride(in) = chloride(out). Allosterically activated by benzodiazepines and the anesthetic alphaxalone. Allosterically activated by pentobarbital. Inhibited by the antagonist bicuculline. Potentiated by histamine. Functionally, alpha subunit of the heteropentameric ligand-gated chloride channel gated by Gamma-aminobutyric acid (GABA), a major inhibitory neurotransmitter in the brain. GABA-gated chloride channels, also named GABA(A) receptors (GABAAR), consist of five subunits arranged around a central pore and contain GABA active binding site(s) located at the alpha and beta subunit interface(s). When activated by GABA, GABAARs selectively allow the flow of chloride anions across the cell membrane down their electrochemical gradient. Alpha-1/GABRA1-containing GABAARs are largely synaptic. Chloride influx into the postsynaptic neuron following GABAAR opening decreases the neuron ability to generate a new action potential, thereby reducing nerve transmission. GABAARs containing alpha-1 and beta-2 or -3 subunits exhibit synaptogenic activity; the gamma-2 subunit being necessary but not sufficient to induce rapid synaptic contacts formation. GABAARs function also as histamine receptor where histamine binds at the interface of two neighboring beta subunits and potentiates GABA response. GABAARs containing alpha, beta and epsilon subunits also permit spontaneous chloride channel activity while preserving the structural information required for GABA-gated openings. Alpha-1-mediated plasticity in the orbitofrontal cortex regulates context-dependent action selection. Together with rho subunits, may also control neuronal and glial GABAergic transmission in the cerebellum. The sequence is that of Gamma-aminobutyric acid receptor subunit alpha-1 from Homo sapiens (Human).